The chain runs to 108 residues: Large ribosomal subunit protein uL23 (108 aa).

This sequence belongs to the universal ribosomal protein uL23 family. In terms of assembly, part of the 50S ribosomal subunit. Contacts protein L29, and trigger factor when it is bound to the ribosome.

Functionally, one of the early assembly proteins it binds 23S rRNA. One of the proteins that surrounds the polypeptide exit tunnel on the outside of the ribosome. Forms the main docking site for trigger factor binding to the ribosome. The protein is Large ribosomal subunit protein uL23 of Polaromonas naphthalenivorans (strain CJ2).